A 101-amino-acid polypeptide reads, in one-letter code: Large ribosomal subunit protein uL23 (101 aa).

This sequence belongs to the universal ribosomal protein uL23 family. As to quaternary structure, part of the 50S ribosomal subunit. Contacts protein L29, and trigger factor when it is bound to the ribosome.

One of the early assembly proteins it binds 23S rRNA. One of the proteins that surrounds the polypeptide exit tunnel on the outside of the ribosome. Forms the main docking site for trigger factor binding to the ribosome. This Paenarthrobacter aurescens (strain TC1) protein is Large ribosomal subunit protein uL23.